A 92-amino-acid chain; its full sequence is MTRSVWKGPFVDGYLLKKAEAASGSGRRDVIKIWSRRSTILPQFVGLTFGVYNGHKHVPVNVSEEMIGHKFGEFAPTRTYYGHAADKKSKRR.

It belongs to the universal ribosomal protein uS19 family.

Protein S19 forms a complex with S13 that binds strongly to the 16S ribosomal RNA. This chain is Small ribosomal subunit protein uS19, found in Xanthobacter autotrophicus (strain ATCC BAA-1158 / Py2).